The sequence spans 89 residues: Large ribosomal subunit protein eL34 (89 aa).

The tract at residues 41-69 is disordered; the sequence is RPLNGVPRGRPSELRKLPKTAKRPERPYP. Basic and acidic residues predominate over residues 50-66; the sequence is RPSELRKLPKTAKRPER.

Belongs to the eukaryotic ribosomal protein eL34 family.

This Thermococcus gammatolerans (strain DSM 15229 / JCM 11827 / EJ3) protein is Large ribosomal subunit protein eL34.